Consider the following 109-residue polypeptide: uncharacterized protein (109 aa).

Positions 27 to 89 (KEEAHQFRDK…LKRIDELIAV (63 aa)) form a coiled coil.

This is an uncharacterized protein from Streptococcus pneumoniae.